We begin with the raw amino-acid sequence, 244 residues long: 5-oxoprolinase subunit A (244 aa).

This sequence belongs to the LamB/PxpA family. As to quaternary structure, forms a complex composed of PxpA, PxpB and PxpC.

It carries out the reaction 5-oxo-L-proline + ATP + 2 H2O = L-glutamate + ADP + phosphate + H(+). Functionally, catalyzes the cleavage of 5-oxoproline to form L-glutamate coupled to the hydrolysis of ATP to ADP and inorganic phosphate. The sequence is that of 5-oxoprolinase subunit A from Salmonella paratyphi C (strain RKS4594).